Here is a 181-residue protein sequence, read N- to C-terminus: MSEAPKKRWYVVQAFSGFEGRVAQSLREHIKLHDMEELFGEVMVPTEEVVEIRGGQRRKSERKFFPGYVLVQMVMNDASWHLVRSVPRVMGFIGGTSDRPAPISDKEVDAIMNRLQQVGDKPRPKTLFEPGELVRVSDGPFADFNGVVEEVDYEKSRLKVSVSIFGRATPVELDFSQVEKG.

The KOW domain occupies 130–161 (PGELVRVSDGPFADFNGVVEEVDYEKSRLKVS).

The protein belongs to the NusG family. Monomer. Interacts with the transcription termination factor Rho and with RNA polymerase.

Functionally, participates in transcription elongation, termination and antitermination. In the absence of Rho, increases the rate of transcription elongation by the RNA polymerase (RNAP), probably by partially suppressing pausing. In the presence of Rho, modulates most Rho-dependent termination events by interacting with the RNAP to render the complex more susceptible to the termination activity of Rho. May be required to overcome a kinetic limitation of Rho to function at certain terminators. Also involved in ribosomal RNA transcriptional antitermination. This chain is Transcription termination/antitermination protein NusG, found in Yersinia pestis.